The sequence spans 339 residues: MIKVAAAGGGTGGHLYPLLAILETLAKRVDVKVLFFAVKGKIDERVVRKDHPEFETVSIDVRGLLRPLHHPKNLWRTLKIGIATIEVKKHLKRFKPDLVVLTGGYISGVVGLAAKDLGIPIFVHEQNVVPGLAVKVLSQYAKKVFVSFERTRDYLREWQDKIVVTGCPVRETEKEAPLKDFVLVLGGSLGSEAINELMEKVYPELQETQFVHSTGSDDWTERLSVFPNVTALTYIDPMGAYWKKAIASISRAGASTIAEMMYYGVPGILIPWESSAESHQLENALEAERLGYAIVIRENEASPRKIIESIDKVVKKGKIEKMKENPASKISKEILGEIM.

UDP-N-acetyl-alpha-D-glucosamine is bound by residues 11-13, Asn-127, Arg-170, Ser-188, Ile-235, and Gln-280; that span reads TGG.

It belongs to the glycosyltransferase 28 family. MurG subfamily.

The protein localises to the cell inner membrane. The enzyme catalyses di-trans,octa-cis-undecaprenyl diphospho-N-acetyl-alpha-D-muramoyl-L-alanyl-D-glutamyl-meso-2,6-diaminopimeloyl-D-alanyl-D-alanine + UDP-N-acetyl-alpha-D-glucosamine = di-trans,octa-cis-undecaprenyl diphospho-[N-acetyl-alpha-D-glucosaminyl-(1-&gt;4)]-N-acetyl-alpha-D-muramoyl-L-alanyl-D-glutamyl-meso-2,6-diaminopimeloyl-D-alanyl-D-alanine + UDP + H(+). It participates in cell wall biogenesis; peptidoglycan biosynthesis. Cell wall formation. Catalyzes the transfer of a GlcNAc subunit on undecaprenyl-pyrophosphoryl-MurNAc-pentapeptide (lipid intermediate I) to form undecaprenyl-pyrophosphoryl-MurNAc-(pentapeptide)GlcNAc (lipid intermediate II). The polypeptide is UDP-N-acetylglucosamine--N-acetylmuramyl-(pentapeptide) pyrophosphoryl-undecaprenol N-acetylglucosamine transferase (Thermotoga maritima (strain ATCC 43589 / DSM 3109 / JCM 10099 / NBRC 100826 / MSB8)).